We begin with the raw amino-acid sequence, 322 residues long: tRNA U34 carboxymethyltransferase (322 aa).

Residues lysine 90, tryptophan 104, lysine 109, glycine 129, 151 to 153 (DPT), 180 to 181 (IE), methionine 195, tyrosine 199, and arginine 314 each bind carboxy-S-adenosyl-L-methionine.

Belongs to the class I-like SAM-binding methyltransferase superfamily. CmoB family. As to quaternary structure, homotetramer.

The enzyme catalyses carboxy-S-adenosyl-L-methionine + 5-hydroxyuridine(34) in tRNA = 5-carboxymethoxyuridine(34) in tRNA + S-adenosyl-L-homocysteine + H(+). Functionally, catalyzes carboxymethyl transfer from carboxy-S-adenosyl-L-methionine (Cx-SAM) to 5-hydroxyuridine (ho5U) to form 5-carboxymethoxyuridine (cmo5U) at position 34 in tRNAs. In Citrobacter koseri (strain ATCC BAA-895 / CDC 4225-83 / SGSC4696), this protein is tRNA U34 carboxymethyltransferase.